A 187-amino-acid chain; its full sequence is Putative protein 2 (187 aa).

A run of 2 helical transmembrane segments spans residues M10–V27 and V99–V121.

It belongs to the TMEM9 family.

The protein resides in the membrane. The polypeptide is Putative protein 2 (Takifugu rubripes (Japanese pufferfish)).